The chain runs to 1168 residues: DNA-directed RNA polymerase subunit beta (1168 aa).

The protein belongs to the RNA polymerase beta chain family. The RNAP catalytic core consists of 2 alpha, 1 beta, 1 beta' and 1 omega subunit. When a sigma factor is associated with the core the holoenzyme is formed, which can initiate transcription.

The catalysed reaction is RNA(n) + a ribonucleoside 5'-triphosphate = RNA(n+1) + diphosphate. In terms of biological role, DNA-dependent RNA polymerase catalyzes the transcription of DNA into RNA using the four ribonucleoside triphosphates as substrates. The protein is DNA-directed RNA polymerase subunit beta of Rhodococcus opacus (strain B4).